A 525-amino-acid polypeptide reads, in one-letter code: Peptide chain release factor 3 (525 aa).

Residues 8 to 276 form the tr-type G domain; sequence AMRRTFAIIS…AFVKEAPPPQ (269 aa). GTP is bound by residues 17 to 24, 85 to 89, and 139 to 142; these read SHPDAGKT, DTPGH, and NKMD.

It belongs to the TRAFAC class translation factor GTPase superfamily. Classic translation factor GTPase family. PrfC subfamily.

It is found in the cytoplasm. In terms of biological role, increases the formation of ribosomal termination complexes and stimulates activities of RF-1 and RF-2. It binds guanine nucleotides and has strong preference for UGA stop codons. It may interact directly with the ribosome. The stimulation of RF-1 and RF-2 is significantly reduced by GTP and GDP, but not by GMP. The chain is Peptide chain release factor 3 from Coxiella burnetii (strain RSA 331 / Henzerling II).